A 176-amino-acid chain; its full sequence is Cathelicidin-2 (176 aa).

An N-terminal signal peptide occupies residues 1–29 (METQGASLSLGRWSLWLLLLGLVLPSASA). Q30 carries the post-translational modification Pyrrolidone carboxylic acid. Residues 30-130 (QALSYREAVL…DINCNELQSV (101 aa)) constitute a propeptide that is removed on maturation. Disulfide bonds link C85–C96 and C107–C124. The tract at residues 135-176 (PIRRPPIRPPFRPPFRPPVRPPIRPPFRPPFRPPIGPFPGRR) is disordered. Residues 141-176 (IRPPFRPPFRPPVRPPIRPPFRPPFRPPIGPFPGRR) are compositionally biased toward pro residues. The residue at position 173 (P173) is a Proline amide. A propeptide spans 174-176 (GRR) (removed in mature form).

This sequence belongs to the cathelicidin family. In terms of processing, elastase is responsible for its maturation.

Its subcellular location is the secreted. Binds to the lipid A moiety of bacterial lipipolysaccharides (LPS), a glycolipid present in the outer membrane of all Gram-negative bacteria. Potent antimicrobial activity. This is Cathelicidin-2 (CATHL2) from Ovis aries (Sheep).